The following is a 95-amino-acid chain: MARSIKKGPFVDTHVQKKIDNALEKNDKKVIKTWSRRSTILPETIGLTFAVHNGRKFVPVYITENMIGHKLGEFAPTRTFHGHAEKKAAAPAAKK.

This sequence belongs to the universal ribosomal protein uS19 family.

Protein S19 forms a complex with S13 that binds strongly to the 16S ribosomal RNA. This is Small ribosomal subunit protein uS19 from Bdellovibrio bacteriovorus (strain ATCC 15356 / DSM 50701 / NCIMB 9529 / HD100).